Reading from the N-terminus, the 400-residue chain is MSNKLVLVLNCGSSSLKFAVIDAQTGDDQISGLAECFGLEDSRIKWKINGEKQEAALGAFTAHREAVEFIVNKILAGQPELAAQIQAVGHRIVHGGEKFTRSVIIDDSVIKGIEDCASLAPLHNPAHLIGIRAAMASFPKLPQVAVFDTAFHQSMPDRAYVYALPYKLYREHGIRRYGMHGTSHLFVSREAAKMLNKPLAETNVICAHLGNGASVTAVKGGKSVDTSMGLTPLEGLVMGTRCGDIDPSIIYHLVHQLGYTLEEVNNLMNKQSGLLGISELTNDCRGIEEGYADGHKGATLALEIFCYRLAKYIASYTVPLGRLDAVVFTGGIGENSDLIREKVLNLLEIFNFHVDSERNKAARFGKKGIITQDNSTVAMVIPTNEEWVIAEDSIKLINKE.

Asn10 provides a ligand contact to Mg(2+). An ATP-binding site is contributed by Lys17. Arg91 is a binding site for substrate. The Proton donor/acceptor role is filled by Asp148. Residues 208-212 (HLGNG), 283-285 (DCR), and 331-335 (GIGEN) each bind ATP. Glu385 contacts Mg(2+).

Belongs to the acetokinase family. As to quaternary structure, homodimer. Requires Mg(2+) as cofactor. Mn(2+) serves as cofactor.

Its subcellular location is the cytoplasm. It carries out the reaction acetate + ATP = acetyl phosphate + ADP. The protein operates within metabolic intermediate biosynthesis; acetyl-CoA biosynthesis; acetyl-CoA from acetate: step 1/2. Catalyzes the formation of acetyl phosphate from acetate and ATP. Can also catalyze the reverse reaction. This Shewanella putrefaciens (strain CN-32 / ATCC BAA-453) protein is Acetate kinase.